The following is a 264-amino-acid chain: Thiazole synthase (264 aa).

Residue Lys106 is the Schiff-base intermediate with DXP of the active site. Residues Gly167, 193-194 (AG), and 215-216 (NT) contribute to the 1-deoxy-D-xylulose 5-phosphate site.

Belongs to the ThiG family. In terms of assembly, homotetramer. Forms heterodimers with either ThiH or ThiS.

The protein localises to the cytoplasm. It catalyses the reaction [ThiS sulfur-carrier protein]-C-terminal-Gly-aminoethanethioate + 2-iminoacetate + 1-deoxy-D-xylulose 5-phosphate = [ThiS sulfur-carrier protein]-C-terminal Gly-Gly + 2-[(2R,5Z)-2-carboxy-4-methylthiazol-5(2H)-ylidene]ethyl phosphate + 2 H2O + H(+). It participates in cofactor biosynthesis; thiamine diphosphate biosynthesis. Its function is as follows. Catalyzes the rearrangement of 1-deoxy-D-xylulose 5-phosphate (DXP) to produce the thiazole phosphate moiety of thiamine. Sulfur is provided by the thiocarboxylate moiety of the carrier protein ThiS. In vitro, sulfur can be provided by H(2)S. The polypeptide is Thiazole synthase (Xylella fastidiosa (strain Temecula1 / ATCC 700964)).